Reading from the N-terminus, the 475-residue chain is MAATTRRLLYYVSKRFSTAGVRRSYGGLPQSNSKSPPSSSQRLMELESEFSAHNYHPVPVVFSRANGSTIWDPEGKRYIDFLAAYSAVNQGHCHPKIMKALQEQVEKLTLSSRAFYNDKFPVFAERLTNMFGYDMVLPMNTGAEGVETALKLARKWGHEKKNIPKDEAIIVSCCGCFHGRTLAIVSMSCDNDATRGFGPLLPGNLKVDFGDADSLEKIFKEKGDRIAGFLFEPIQGEAGVIIPPDGYLKAVRELCTKYNVLMIADEVQSGLARSGKMLACDWEEIRPDMVILGKALGGGVIPVSAVLADKDVMLHIKPGQHGSTFGGNPLASAVAMASLDVIVEEKLVERSASLGEELRIQLNEIKKQFPKYIKEVRGRGLFNAIEFNSESLSPVSAYDICLSLKERGVLAKPTHNTIVRLTPPLSISSDELRDGSEALHDVLELDLPNLLKINSGKTPVSHITECDRCGRNLYA.

Residues 1–16 (MAATTRRLLYYVSKRF) constitute a mitochondrion transit peptide. The tract at residues 23-43 (RSYGGLPQSNSKSPPSSSQRL) is disordered. The span at 29–41 (PQSNSKSPPSSSQ) shows a compositional bias: low complexity. Pyridoxal 5'-phosphate contacts are provided by residues 142 to 143 (GA) and Phe-177. Arg-180 is an L-ornithine binding site. 265–268 (DEVQ) is a pyridoxal 5'-phosphate binding site. Position 294 is an N6-(pyridoxal phosphate)lysine (Lys-294). Ser-323 is an L-ornithine binding site. Pyridoxal 5'-phosphate is bound at residue Thr-324.

It belongs to the class-III pyridoxal-phosphate-dependent aminotransferase family. In terms of assembly, homotetramer. The cofactor is pyridoxal 5'-phosphate.

The protein localises to the mitochondrion matrix. The enzyme catalyses a 2-oxocarboxylate + L-ornithine = L-glutamate 5-semialdehyde + an L-alpha-amino acid. It functions in the pathway amino-acid biosynthesis; L-proline biosynthesis; L-glutamate 5-semialdehyde from L-ornithine: step 1/1. In terms of biological role, mediates degradation of arginine for nitrogen recycling. Plays a role in non-host disease resistance by regulating pyrroline-5-carboxylate metabolism-induced hypersensitive response. The chain is Ornithine aminotransferase, mitochondrial from Arabidopsis thaliana (Mouse-ear cress).